The primary structure comprises 590 residues: Selenoprotein N (590 aa).

Positions 1 to 26 (MGRARPGQRGPPSPGPAAQPPAPPRR) are disordered. The N-terminal stretch at 1–43 (MGRARPGQRGPPSPGPAAQPPAPPRRRARSLALLGALLAAAAA) is a signal peptide. Positions 9 to 23 (RGPPSPGPAAQPPAP) are enriched in pro residues. The EF-hand domain maps to 67 to 102 (TLGTDGLFLFSSLDTDGDMYISPEEFKPIAEKLTGS). The N-linked (GlcNAc...) asparagine glycan is linked to Asn126. Sec127 is a non-standard amino acid (selenocysteine). An N-linked (GlcNAc...) asparagine glycan is attached at Asn190. A non-standard amino acid (selenocysteine) is located at residue Sec462. Asn483, Asn505, and Asn531 each carry an N-linked (GlcNAc...) asparagine glycan.

As to quaternary structure, interacts with RYR1, RYR2 and RYR3. N-glycosylated. In terms of tissue distribution, isoform 1 and isoform 2 are expressed in skeletal muscle, brain, lung and placenta. Isoform 2 is also expressed in heart, diaphragm and stomach.

The protein localises to the endoplasmic reticulum membrane. Functionally, plays an important role in cell protection against oxidative stress and in the regulation of redox-related calcium homeostasis. Regulates the calcium level of the ER by protecting the calcium pump ATP2A2 against the oxidoreductase ERO1A-mediated oxidative damage. Within the ER, ERO1A activity increases the concentration of H(2)O(2), which attacks the luminal thiols in ATP2A2 and thus leads to cysteinyl sulfenic acid formation (-SOH) and SEPN1 reduces the SOH back to free thiol (-SH), thus restoring ATP2A2 activity. Acts as a modulator of ryanodine receptor (RyR) activity: protects RyR from oxidation due to increased oxidative stress, or directly controls the RyR redox state, regulating the RyR-mediated calcium mobilization required for normal muscle development and differentiation. Its function is as follows. Essential for muscle regeneration and satellite cell maintenance in skeletal muscle. The protein is Selenoprotein N of Homo sapiens (Human).